The sequence spans 70 residues: Sec-independent protein translocase protein TatA (70 aa).

A helical membrane pass occupies residues 1-21 (MFGLGGQELLLILLIILLLFG). The disordered stretch occupies residues 47–70 (EDEFNKAMSDPPEKKEKESPSDKG). A compositionally biased stretch (basic and acidic residues) spans 57–70 (PPEKKEKESPSDKG).

It belongs to the TatA/E family. In terms of assembly, forms a complex with TatC.

It is found in the cell inner membrane. Its function is as follows. Part of the twin-arginine translocation (Tat) system that transports large folded proteins containing a characteristic twin-arginine motif in their signal peptide across membranes. TatA could form the protein-conducting channel of the Tat system. In Prosthecochloris aestuarii (strain DSM 271 / SK 413), this protein is Sec-independent protein translocase protein TatA.